Here is a 370-residue protein sequence, read N- to C-terminus: Peptidyl-prolyl cis-trans isomerase D (370 aa).

Serine 5 carries the phosphoserine modification. Residues 19–183 (FFDVDIGGER…KLCVIAECGE (165 aa)) form the PPIase cyclophilin-type domain. The residue at position 171 (lysine 171) is an N6-acetyllysine. A chaperone activity region spans residues 185-215 (KEGDDGGIFPKDGSGDSHPDFPEDADIDLKD). Residue serine 198 is modified to Phosphoserine. Residues 214-370 (KDVDKILLIT…EKAVYAKMFA (157 aa)) are interaction with HSP90AB1. 3 TPR repeats span residues 223-256 (TEDL…VDSS), 273-306 (LSCV…DPSN), and 307-340 (TKAL…APED).

This sequence belongs to the cyclophilin-type PPIase family. PPIase D subfamily. Identified in ESR1 or NR3C1/GCR steroid receptor-chaperone complexes. Found in HSP90 chaperone complexes with kinase clients LCK or EIF2AK1. Two monomers associate with one HSP90 homodimer. Interacts with HSP90AA1. Interacts with HSP90AB1; PPID and FKBP4 compete for binding to HSP90AB1 and the interaction is mutually exclusive with the PPID:HSPA8 interaction. Interacts with HSPA8; PPID and STIP1 but not FKBP4 compete for binding to HSPA8 and the interaction is mutually exclusive with the PPID:HSP90AB1 interaction. Interacts with S100A1 and S100A2; the interactions dissociate the PPID:HSP90AA1 interaction. Interacts with S100A6. Interacts with MYB, ILF2, XRCC6, RACK1 and RPS3. Interacts with cytoplasmic dynein 1 intermediate chain (DYNC1I1 or DYNC1I2). Widely expressed.

It localises to the cytoplasm. It is found in the nucleus. The protein localises to the nucleolus. Its subcellular location is the nucleoplasm. It catalyses the reaction [protein]-peptidylproline (omega=180) = [protein]-peptidylproline (omega=0). Less sensitive to inhibition by cyclosporin A than is CYP-18. PPIase that catalyzes the cis-trans isomerization of proline imidic peptide bonds in oligopeptides and may therefore assist protein folding. Proposed to act as a co-chaperone in HSP90 complexes such as in unligated steroid receptors heterocomplexes. Different co-chaperones seem to compete for association with HSP90 thus establishing distinct HSP90-co-chaperone-receptor complexes with the potential to exert tissue-specific receptor activity control. May have a preference for estrogen receptor complexes and is not found in glucocorticoid receptor complexes. May be involved in cytoplasmic dynein-dependent movement of the receptor from the cytoplasm to the nucleus. May regulate MYB by inhibiting its DNA-binding activity. Involved in regulation of AHR signaling by promoting the formation of the AHR:ARNT dimer; the function is independent of HSP90 but requires the chaperone activity. Involved in regulation of UV radiation-induced apoptosis. Promotes cell viability in anaplastic lymphoma kinase-positive anaplastic large-cell lymphoma (ALK+ ALCL) cell lines. Functionally, (Microbial infection) May be involved in hepatitis C virus (HCV) replication and release. In Homo sapiens (Human), this protein is Peptidyl-prolyl cis-trans isomerase D.